We begin with the raw amino-acid sequence, 664 residues long: DCC-interacting protein 13-beta (664 aa).

Positions 1-428 are required for RAB5A binding; it reads MPAVDKLLLE…NSEMENENDK (428 aa). The 266-residue stretch at 3–268 folds into the BAR domain; sequence AVDKLLLEEA…ESVYTPDSDV (266 aa). One can recognise a PH domain in the interval 277–375; the sequence is LIQKAGYLNL…WICAINNISR (99 aa). Positions 488-637 constitute a PID domain; it reads SLLQQMFIVR…LMLSIPLTND (150 aa). The interval 643-664 is disordered; that stretch reads LNDQPDDDDGNPNEHRGAESEA. Residues 654–664 show a composition bias toward basic and acidic residues; that stretch reads PNEHRGAESEA.

As to quaternary structure, homodimer. Homotetramer. Binds RAB5A/Rab5 through an N-terminal domain. This interaction is essential for its recruitment to endosomal membranes as well as its role in cell proliferation. Binds subunits of the NuRD/MeCP1 complex. Interacts with FSHR; interaction is independent of follicle stimulating hormone stimulation. Interacts with APPL1; the interaction is decreased by adiponectin in a time-dependent manner. Forms a complex comprising APPL1, RUVBL2, CTNNB1, HDAC1 and HDAC2; interaction reduces interaction between CTNNB1, HDAC1, HDAC2 and RUVBL2 leading to the decrease of deacetylase activity of this complex; affects the recruitment of repressive complexes to the Wnt target genes. Interacts (via BAR domain) with TBC1D1; interaction is dependent of TBC1D1 phosphorylation at 'Ser-235'; interaction diminishes the phosphorylation of TBC1D1 at 'Thr-596', resulting in inhibition of SLC2A4 translocation and glucose uptake. Interacts with ANXA2; targets APPL2 to endosomes and acting in parallel to RAB5A. Interacts with RAB31 (in GTP-bound form); interaction contributes to or enhances recruitment of APPL2 to the phagosomes; interaction enhances Fc-gamma receptor-mediated phagocytosis through PI3K/Akt signaling in macrophages. Interacts with PIK3R1; forms a complex with PIK3R1 and APPL1. Interacts (via BAR domain) with ADIPOR1; hinders the accessibility of APPL1 to ADIPOR1; negatively regulates adiponectin signaling; ADIPOQ dissociates this interaction and facilitates the recruitment of APPL1 to ADIPOR1. Interacts (via BAR domain) with ADIPOR2; ADIPOQ dissociates this interaction. In terms of tissue distribution, high levels in brain, heart, kidney and skeletal muscle.

The protein resides in the early endosome membrane. It localises to the nucleus. The protein localises to the cell membrane. Its subcellular location is the endosome membrane. It is found in the cytoplasm. The protein resides in the cytoplasmic vesicle. It localises to the phagosome. The protein localises to the cell projection. Its subcellular location is the ruffle. It is found in the ruffle membrane. The protein resides in the phagosome membrane. Functionally, multifunctional adapter protein that binds to various membrane receptors, nuclear factors and signaling proteins to regulate many processes, such as cell proliferation, immune response, endosomal trafficking and cell metabolism. Regulates signaling pathway leading to cell proliferation through interaction with RAB5A and subunits of the NuRD/MeCP1 complex. Plays a role in immune response by modulating phagocytosis, inflammatory and innate immune responses. In macrophages, enhances Fc-gamma receptor-mediated phagocytosis through interaction with RAB31 leading to activation of PI3K/Akt signaling. In response to LPS, modulates inflammatory responses by playing a key role on the regulation of TLR4 signaling and in the nuclear translocation of RELA/NF-kappa-B p65 and the secretion of pro- and anti-inflammatory cytokines. Also functions as a negative regulator of innate immune response via inhibition of AKT1 signaling pathway by forming a complex with APPL1 and PIK3R1. Plays a role in endosomal trafficking of TGFBR1 from the endosomes to the nucleus. Plays a role in cell metabolism by regulating adiponecting ans insulin signaling pathways and adaptative thermogenesis. In muscle, negatively regulates adiponectin-simulated glucose uptake and fatty acid oxidation by inhibiting adiponectin signaling pathway through APPL1 sequestration thereby antagonizing APPL1 action. In muscles, negatively regulates insulin-induced plasma membrane recruitment of GLUT4 and glucose uptake through interaction with TBC1D1. Plays a role in cold and diet-induced adaptive thermogenesis by activating ventromedial hypothalamus (VMH) neurons throught AMPK inhibition which enhances sympathetic outflow to subcutaneous white adipose tissue (sWAT), sWAT beiging and cold tolerance. Also plays a role in other signaling pathways namely Wnt/beta-catenin, HGF and glucocorticoid receptor signaling. Positive regulator of beta-catenin/TCF-dependent transcription through direct interaction with RUVBL2/reptin resulting in the relief of RUVBL2-mediated repression of beta-catenin/TCF target genes by modulating the interactions within the beta-catenin-reptin-HDAC complex. May affect adult neurogenesis in hippocampus and olfactory system via regulating the sensitivity of glucocorticoid receptor. Required for fibroblast migration through HGF cell signaling. This Homo sapiens (Human) protein is DCC-interacting protein 13-beta.